The following is a 121-amino-acid chain: Large ribosomal subunit protein bL20 (121 aa).

Belongs to the bacterial ribosomal protein bL20 family.

Binds directly to 23S ribosomal RNA and is necessary for the in vitro assembly process of the 50S ribosomal subunit. It is not involved in the protein synthesizing functions of that subunit. The protein is Large ribosomal subunit protein bL20 of Francisella tularensis subsp. mediasiatica (strain FSC147).